Consider the following 371-residue polypeptide: tRNA-specific 2-thiouridylase MnmA (371 aa).

Residues 24–31 (AMSGGVDS) and Leu50 each bind ATP. The active-site Nucleophile is Cys120. Cysteines 120 and 216 form a disulfide. ATP is bound at residue Gly144. The interaction with tRNA stretch occupies residues 166-168 (KDQ). Residue Cys216 is the Cysteine persulfide intermediate of the active site.

Belongs to the MnmA/TRMU family.

Its subcellular location is the cytoplasm. The enzyme catalyses S-sulfanyl-L-cysteinyl-[protein] + uridine(34) in tRNA + AH2 + ATP = 2-thiouridine(34) in tRNA + L-cysteinyl-[protein] + A + AMP + diphosphate + H(+). Its function is as follows. Catalyzes the 2-thiolation of uridine at the wobble position (U34) of tRNA, leading to the formation of s(2)U34. The chain is tRNA-specific 2-thiouridylase MnmA from Wolbachia sp. subsp. Brugia malayi (strain TRS).